Reading from the N-terminus, the 330-residue chain is Succinylglutamate desuccinylase (330 aa).

The Zn(2+) site is built by His-53, Glu-56, and His-147. Glu-210 is a catalytic residue.

The protein belongs to the AspA/AstE family. Succinylglutamate desuccinylase subfamily. Zn(2+) is required as a cofactor.

The catalysed reaction is N-succinyl-L-glutamate + H2O = L-glutamate + succinate. It participates in amino-acid degradation; L-arginine degradation via AST pathway; L-glutamate and succinate from L-arginine: step 5/5. In terms of biological role, transforms N(2)-succinylglutamate into succinate and glutamate. This Yersinia pseudotuberculosis serotype O:1b (strain IP 31758) protein is Succinylglutamate desuccinylase.